The chain runs to 336 residues: MSLDIDQIALHQLVKRDEQTLDVVLRDSLLPTNAAVEEMMEELHRVYSAKSKAYGLFNEGSELADALRTCRKEDKDFLAFSRAATGRLRDELAKYPFAEGGVVLFGQYRYLAVEYLLIAVLNSRNSSRVNEELDINTTHYLDINHADIVARIDLTEWETNPESTRYLTFLKGRVGRKVSDFFMDFLAAAEGLDTKAQNRGLLQAVDDYCADAQLDKNERQSVRQQVYSYCNEQLQAGEEIELQELSKEIAPVGEKDFLQFSSEQGYQLEDSFPADRGTLRQLTKFAGSGGGISMNFDAMLLGERIFWDAATDTLTIRGTPPNLRDQLQRRQNSGNK.

The protein belongs to the YejK family.

It is found in the cytoplasm. Its subcellular location is the nucleoid. The sequence is that of Nucleoid-associated protein Spro_3255 from Serratia proteamaculans (strain 568).